The primary structure comprises 133 residues: Holo-[acyl-carrier-protein] synthase (133 aa).

2 residues coordinate Mg(2+): D8 and E58.

This sequence belongs to the P-Pant transferase superfamily. AcpS family. Mg(2+) is required as a cofactor.

Its subcellular location is the cytoplasm. The catalysed reaction is apo-[ACP] + CoA = holo-[ACP] + adenosine 3',5'-bisphosphate + H(+). Transfers the 4'-phosphopantetheine moiety from coenzyme A to a Ser of acyl-carrier-protein. The polypeptide is Holo-[acyl-carrier-protein] synthase (Sphingopyxis alaskensis (strain DSM 13593 / LMG 18877 / RB2256) (Sphingomonas alaskensis)).